The primary structure comprises 443 residues: Threonine/serine transporter TdcC (443 aa).

11 helical membrane-spanning segments follow: residues 22–42, 44–64, 97–117, 135–155, 163–183, 207–227, 259–279, 319–339, 366–386, 389–409, and 422–442; these read TTWTLGLFGTAIGAGVLFFPI, AGFGGLIPILVMLVLAYPIAF, GVVITFLYFFAICPLLWIYGV, ALNRGFVALFLLLLMAVIIWF, VMSFLVWPFIASLVLISLSLI, ILVTVWLGISIMVFSFNFSPI, ASILMVAVVMFFAFSCLFALS, ASIIALVAIFKSFFGHYLGTL, LSMVFIMGSTWLVAYVNPNIL, IEAMGAPIIASLLCLLPMYAI, and IDNVFVTAIGLLTISNIVYKV.

Belongs to the amino acid/polyamine transporter 2 family. SdaC/TdcC subfamily.

The protein resides in the cell inner membrane. It catalyses the reaction L-threonine(in) + H(+)(in) = L-threonine(out) + H(+)(out). The catalysed reaction is L-serine(in) + H(+)(in) = L-serine(out) + H(+)(out). Its function is as follows. Involved in the import of threonine and serine into the cell, with the concomitant import of a proton (symport system). This Escherichia fergusonii (strain ATCC 35469 / DSM 13698 / CCUG 18766 / IAM 14443 / JCM 21226 / LMG 7866 / NBRC 102419 / NCTC 12128 / CDC 0568-73) protein is Threonine/serine transporter TdcC.